A 1369-amino-acid polypeptide reads, in one-letter code: Mediator of RNA polymerase II transcription subunit 23 (1369 aa).

Positions T1337–Q1369 are disordered. A compositionally biased stretch (pro residues) spans A1341–N1357.

This sequence belongs to the Mediator complex subunit 23 family. In terms of assembly, component of the Mediator complex.

The protein resides in the nucleus. Component of the Mediator complex, a coactivator involved in the regulated transcription of nearly all RNA polymerase II-dependent genes. Mediator functions as a bridge to convey information from gene-specific regulatory proteins to the basal RNA polymerase II transcription machinery. Mediator is recruited to promoters by direct interactions with regulatory proteins and serves as a scaffold for the assembly of a functional preinitiation complex with RNA polymerase II and the general transcription factors. This chain is Mediator of RNA polymerase II transcription subunit 23 (med23), found in Xenopus laevis (African clawed frog).